Here is an 89-residue protein sequence, read N- to C-terminus: MSSQQQKQPCTPPPQLQQQQVKQPCQPPPQEPCIPKTKEPCLPKVPEPCHPKVPEPCQPKVPEPCHPKVPEPCPSTVTPAPAQQKTKQK.

Residues 1 to 29 form a disordered region; sequence MSSQQQKQPCTPPPQLQQQQVKQPCQPPP. At S2 the chain carries N-acetylserine. Tandem repeats lie at residues 3 to 14, 18 to 29, 31 to 38, 39 to 46, 47 to 54, 55 to 62, 63 to 70, and 71 to 78. Residues 3–29 form a 2 X 12 AA approximate repeats region; it reads SQQQKQPCTPPPQLQQQQVKQPCQPPP. A 6 X 8 AA approximate tandem repeats region spans residues 31-78; the sequence is EPCIPKTKEPCLPKVPEPCHPKVPEPCQPKVPEPCHPKVPEPCPSTVT. The interval 68–89 is disordered; it reads KVPEPCPSTVTPAPAQQKTKQK. A compositionally biased stretch (polar residues) spans 75-89; sequence STVTPAPAQQKTKQK.

This sequence belongs to the cornifin (SPRR) family.

The protein resides in the cytoplasm. Its function is as follows. Cross-linked envelope protein of keratinocytes. It is a keratinocyte protein that first appears in the cell cytosol, but ultimately becomes cross-linked to membrane proteins by transglutaminase. All that results in the formation of an insoluble envelope beneath the plasma membrane. The polypeptide is Cornifin (SPRR1) (Macaca mulatta (Rhesus macaque)).